The sequence spans 151 residues: Transcriptional regulator SyrB (151 aa).

The interval 1–61 (MADESNTGPV…RYSEQERNDK (61 aa)) is disordered. Over residues 33–48 (PQKAAAEPAQPKAPAA) the composition is skewed to low complexity. Over residues 52–61 (RYSEQERNDK) the composition is skewed to basic and acidic residues.

Belongs to the SyrB family.

Responsible for the repression of SyrM activity. The polypeptide is Transcriptional regulator SyrB (syrB) (Rhizobium meliloti (strain 1021) (Ensifer meliloti)).